A 592-amino-acid polypeptide reads, in one-letter code: Transcription factor MYC3 (592 aa).

Positions 82–141 (STGDNTVILGWGDGYYKGEEDKEKKKNNTNTAEQEHRKRVIRELNSLISGGIGVSDESND) are JAZ-interaction domain. Disordered regions lie at residues 261 to 313 (ENDP…VENQ), 341 to 361 (CGNESSKKRTSVSKGSNNDEG), 393 to 422 (EPPEKKPRKRGRKPANGREEPLNHVEAERQ), and 465 to 508 (QQAE…STAS). Low complexity predominate over residues 278–293 (SPARVNNGNNSNSNSK). A compositionally biased stretch (basic and acidic residues) spans 294–306 (SDSHQISKLEKND). Positions 352 to 361 (VSKGSNNDEG) are enriched in polar residues. Positions 398–407 (KPRKRGRKPA) are enriched in basic residues. 2 stretches are compositionally biased toward basic and acidic residues: residues 408-422 (NGREEPLNHVEAERQ) and 468-482 (ESDKEEIQKKLDGMS). The region spanning 411-460 (EEPLNHVEAERQRREKLNQRFYSLRAVVPNVSKMDKASLLGDAISYINEL) is the bHLH domain.

In terms of assembly, homo- and heterodimer. Interacts with MYB28, MYB29, MYB34, MYB51, MYB76, MYB122, MYC2, MYC4, AFPH2/NINJA and the JAZ repressors TIFY10A/JAZ1, TIFY10B/JAZ2, TIFY6B/JAZ3, TIFY11A/JAZ5, TIFY11B/JAZ6, TIFY5B/JAZ7, TIFY5A/JAZ8, TIFY7/JAZ9, TIFY9/JAZ10, TIFY3A/JAZ11 and TIFY3B/JAZ12. In terms of tissue distribution, constitutively expressed in roots, stems, leaves, flowers, and seedlings.

The protein resides in the nucleus. Functionally, transcription factor involved in tryptophan, jasmonic acid (JA) and other stress-responsive gene regulation. With MYC2 and MYC4, controls additively subsets of JA-dependent responses. Can form complexes with all known glucosinolate-related MYBs to regulate glucosinolate biosynthesis. Binds to the G-box (5'-CACGTG-3') of promoters. Activates multiple TIFY/JAZ promoters. The protein is Transcription factor MYC3 (MYC3) of Arabidopsis thaliana (Mouse-ear cress).